A 362-amino-acid polypeptide reads, in one-letter code: Methylthioribose-1-phosphate isomerase (362 aa).

The Proton donor role is filled by Asp-252.

It belongs to the eIF-2B alpha/beta/delta subunits family. MtnA subfamily.

It is found in the cytoplasm. The protein localises to the nucleus. It carries out the reaction 5-(methylsulfanyl)-alpha-D-ribose 1-phosphate = 5-(methylsulfanyl)-D-ribulose 1-phosphate. Its pathway is amino-acid biosynthesis; L-methionine biosynthesis via salvage pathway; L-methionine from S-methyl-5-thio-alpha-D-ribose 1-phosphate: step 1/6. Functionally, catalyzes the interconversion of methylthioribose-1-phosphate (MTR-1-P) into methylthioribulose-1-phosphate (MTRu-1-P). The chain is Methylthioribose-1-phosphate isomerase from Drosophila persimilis (Fruit fly).